Reading from the N-terminus, the 168-residue chain is Small ribosomal subunit protein uS4 (168 aa).

Positions 103–167 (RRLQTIVYKK…SPFKKSIEEK (65 aa)) constitute an S4 RNA-binding domain.

The protein belongs to the universal ribosomal protein uS4 family. Part of the 30S ribosomal subunit. Contacts protein S5. The interaction surface between S4 and S5 is involved in control of translational fidelity.

Functionally, one of the primary rRNA binding proteins, it binds directly to 16S rRNA where it nucleates assembly of the body of the 30S subunit. Its function is as follows. With S5 and S12 plays an important role in translational accuracy. The polypeptide is Small ribosomal subunit protein uS4 (Staphylothermus marinus (strain ATCC 43588 / DSM 3639 / JCM 9404 / F1)).